The primary structure comprises 89 residues: Small ribosomal subunit protein uS15 (89 aa).

Belongs to the universal ribosomal protein uS15 family. In terms of assembly, part of the 30S ribosomal subunit. Forms a bridge to the 50S subunit in the 70S ribosome, contacting the 23S rRNA.

In terms of biological role, one of the primary rRNA binding proteins, it binds directly to 16S rRNA where it helps nucleate assembly of the platform of the 30S subunit by binding and bridging several RNA helices of the 16S rRNA. Its function is as follows. Forms an intersubunit bridge (bridge B4) with the 23S rRNA of the 50S subunit in the ribosome. This Halalkalibacterium halodurans (strain ATCC BAA-125 / DSM 18197 / FERM 7344 / JCM 9153 / C-125) (Bacillus halodurans) protein is Small ribosomal subunit protein uS15.